The sequence spans 498 residues: Osteoclast stimulatory transmembrane protein (498 aa).

Over 1–51 (MRTIRAATEHLFGLGWKFWRLGICKAVVPLQAAWKAFSQPVPASCNELLTQ) the chain is Cytoplasmic. The chain crosses the membrane as a helical span at residues 52–72 (LLLCVSLASLIAGLAHHWLVS). Residues 73-81 (LQLYPLGPP) lie on the Extracellular side of the membrane. Residues 82–102 (ALVTSLCGLFVFLSLGLVPPI) traverse the membrane as a helical segment. Residues 103 to 121 (RCLFVLSVPTLGSKQGRRL) are Cytoplasmic-facing. Residues 122–142 (LLSYSAANLAVAVVPNVLGNV) traverse the membrane as a helical segment. The Extracellular portion of the chain corresponds to 143–226 (RAAGQVLSCV…LARAALGTQR (84 aa)). A helical transmembrane segment spans residues 227 to 247 (VVTGLFLLGLLGESAWYLHRY). Residues 248 to 303 (LTDLRFDNIYATRQLVRQLAQAGATHLLTSPPPWLLQTAQPKLSREELLSCLLRLG) are Cytoplasmic-facing. A helical transmembrane segment spans residues 304–324 (LLALLLVATAVTVASDYGAFL). The Extracellular portion of the chain corresponds to 325–401 (LAQAAVAWAQ…QAQPPRVTAA (77 aa)). A helical transmembrane segment spans residues 402–422 (LAAGALQLLAGATLVLQAYAW). Residues 423–498 (RLRHTIAASF…DSLGPPYDLE (76 aa)) are Cytoplasmic-facing. Positions 449 to 498 (QRRHNQSDHLNKQPGTMATRESRKPGQGTRTLESQGPQAHDSLGPPYDLE) are disordered. Over residues 476–485 (GTRTLESQGP) the composition is skewed to polar residues.

As to expression, expressed in osteoclast (at protein level). Ubiquitous. Highly expressed in multi-nuclear osteoclast cells compared to mono-nuclear macrophages. Expressed in foreign body giant cells (FBGCs).

It is found in the membrane. Functionally, probable cell surface receptor that plays a role in cellular fusion and cell differentiation. Cooperates with DCSTAMP in modulating cell-cell fusion in both osteoclasts and foreign body giant cells (FBGCs). Involved in osteoclast bone resorption. Promotes osteoclast differentiation and may play a role in the multinucleated osteoclast maturation. In Mus musculus (Mouse), this protein is Osteoclast stimulatory transmembrane protein (Ocstamp).